The chain runs to 299 residues: Protein phosphatase 1 regulatory subunit 3D (299 aa).

A disordered region spans residues 1–22 (MSRGPSSAVLPSALGSRKLGPR). A phosphoserine mark is found at Ser-23, Ser-25, and Ser-28. The interval 37 to 94 (EPRACRPPGSPGRAPPPTPAPSGCDPRLRPIILRRARSLPSSPERRQKAAGAPGAACR) is disordered. The span at 44–56 (PGSPGRAPPPTPA) shows a compositional bias: pro residues. Residues 57-67 (PSGCDPRLRPI) show a composition bias toward low complexity. Ser-74 is modified (phosphoserine). The span at 85–94 (AAGAPGAACR) shows a compositional bias: low complexity. Residues 101–104 (LRVR) carry the PP1-binding motif motif. Ser-133 carries the post-translational modification Phosphoserine. The CBM21 domain occupies 169–278 (GERLQRQLVC…NNDHRDYSLT (110 aa)).

In terms of assembly, interacts with PPP1CC catalytic subunit of PP1, and associates with glycogen. Interacts with EPM2A; in the presence of NHLC1/malin the interaction leads to PPP1R3D ubiquitination and autophagic degradation. In terms of tissue distribution, expressed in all tissues tested. High expression in skeletal muscle and heart.

Its function is as follows. Seems to act as a glycogen-targeting subunit for PP1. PP1 is essential for cell division, and participates in the regulation of glycogen metabolism, muscle contractility and protein synthesis. The sequence is that of Protein phosphatase 1 regulatory subunit 3D (PPP1R3D) from Homo sapiens (Human).